The sequence spans 465 residues: Iron-sulfur cluster assembly SufBD family protein SE_0610 (465 aa).

This sequence belongs to the iron-sulfur cluster assembly SufBD family.

The protein is Iron-sulfur cluster assembly SufBD family protein SE_0610 of Staphylococcus epidermidis (strain ATCC 12228 / FDA PCI 1200).